A 342-amino-acid polypeptide reads, in one-letter code: Anthranilate phosphoribosyltransferase (342 aa).

Residues Gly83, 86–87 (GD), Thr91, 93–96 (NVST), 111–119 (KHGNRSVSG), and Ser123 contribute to the 5-phospho-alpha-D-ribose 1-diphosphate site. Gly83 serves as a coordination point for anthranilate. Residue Ser95 coordinates Mg(2+). Asn114 is a binding site for anthranilate. Arg169 serves as a coordination point for anthranilate. Residues Asp228 and Glu229 each contribute to the Mg(2+) site.

The protein belongs to the anthranilate phosphoribosyltransferase family. As to quaternary structure, homodimer. Requires Mg(2+) as cofactor.

It carries out the reaction N-(5-phospho-beta-D-ribosyl)anthranilate + diphosphate = 5-phospho-alpha-D-ribose 1-diphosphate + anthranilate. Its pathway is amino-acid biosynthesis; L-tryptophan biosynthesis; L-tryptophan from chorismate: step 2/5. In terms of biological role, catalyzes the transfer of the phosphoribosyl group of 5-phosphorylribose-1-pyrophosphate (PRPP) to anthranilate to yield N-(5'-phosphoribosyl)-anthranilate (PRA). The chain is Anthranilate phosphoribosyltransferase from Halorhodospira halophila (strain DSM 244 / SL1) (Ectothiorhodospira halophila (strain DSM 244 / SL1)).